The following is a 386-amino-acid chain: Heavy metal-associated isoprenylated plant protein 5 (386 aa).

The segment covering 1–16 (MGEVQEGPKVEQEKKP) has biased composition (basic and acidic residues). The tract at residues 1-40 (MGEVQEGPKVEQEKKPAATVVPVETTDGKPKSGGGDSAAA) is disordered. The 64-residue stretch at 49-112 (VSAFVYKVDM…KLEEKTKRKV (64 aa)) folds into the HMA 1 domain. A metal cation-binding residues include C60 and C63. Positions 129 to 153 (VGEKKADGGDKEAAPPAPAPAAPKE) are disordered. Residues 130–141 (GEKKADGGDKEA) are compositionally biased toward basic and acidic residues. Residues 153–220 (ESVVPLKIRL…KLKRTVEPLV (68 aa)) form the HMA 2 domain. C164 and C167 together coordinate a metal cation. Composition is skewed to basic and acidic residues over residues 223–245 (KKDD…KKEA) and 252–297 (EAKK…KKDG). Residues 223–301 (KKDDGAAENK…EKKKDGGGVP (79 aa)) form a disordered region. The residue at position 383 (C383) is a Cysteine methyl ester. A lipid anchor (S-farnesyl cysteine) is attached at C383. Residues 384–386 (SVM) constitute a propeptide, removed in mature form.

This sequence belongs to the HIPP family. Efficiently farnesylated in vitro.

Its function is as follows. Heavy-metal-binding protein. Involved in disease resistance. The protein is Heavy metal-associated isoprenylated plant protein 5 of Arabidopsis thaliana (Mouse-ear cress).